Here is a 260-residue protein sequence, read N- to C-terminus: MKQRIIDELKRIEQSYGVKIVYAVESGSRAWGFPSQDSDYDVRFIYVPKKEWYFSIEQERDVIEEPIHDLLDISGWELRKTLRLFKKSNPPLLEWLSSDIVYYEAFTTAEQLRKLRTEAFKPEASVYHYINMARRNVKDYLQGQEVKIKKYFYVLRPILACQWIEKHGTIPPMDFTVLMNELVAEPELKAEMETLLERKRRGEELDLEARIDVIHQFIETEIERIMEAAKELKAEKKDMTSELNRLLLNTVEEVWKDGGS.

The stretch at 214–252 (IHQFIETEIERIMEAAKELKAEKKDMTSELNRLLLNTVE) forms a coiled coil.

This is an uncharacterized protein from Bacillus subtilis (strain 168).